Reading from the N-terminus, the 241-residue chain is Synaptogyrin (241 aa).

The 150-residue stretch at 30–179 (FAMKPQVVIR…CALMAYKRFL (150 aa)) folds into the MARVEL domain. A run of 4 helical transmembrane segments spans residues 34 to 54 (PQVV…GCIS), 81 to 101 (MVGV…FLFE), 115 to 135 (ADMG…LYLW), and 155 to 175 (TAIW…LMAY). Residues 216-241 (ASPFGQPQQGGMEQQQSGMEYQQPTY) are disordered. Positions 220–241 (GQPQQGGMEQQQSGMEYQQPTY) are enriched in low complexity.

Belongs to the synaptogyrin family.

It localises to the cytoplasmic vesicle membrane. The protein resides in the cytoplasmic vesicle. It is found in the secretory vesicle membrane. The protein localises to the secretory vesicle. Its subcellular location is the synaptic vesicle membrane. In terms of biological role, required for the correct formation of synaptic vesicles at nerve terminals and has a role in the regulation of the synaptic vesicle exo-endocytic cycle. The sequence is that of Synaptogyrin from Drosophila melanogaster (Fruit fly).